The primary structure comprises 75 residues: Toxin-like peptide AaF1CA7 (75 aa).

Positions 1–22 (MMKLMLFSIIVILFSLIGSIHG) are cleaved as a signal peptide. The region spanning 25 to 75 (VPGNYPLDSSDDTYLCAPLGENPSCIQICRKHGVKYGYCYAFQCWCEYFGR) is the LCN-type CS-alpha/beta domain. 3 cysteine pairs are disulfide-bonded: cysteine 40–cysteine 63, cysteine 49–cysteine 68, and cysteine 53–cysteine 70.

It belongs to the long (3 C-C) scorpion toxin superfamily. Expressed by the venom gland.

It localises to the secreted. Functionally, probable neurotoxin that inhibits ion channels. In Androctonus australis (Sahara scorpion), this protein is Toxin-like peptide AaF1CA7.